Consider the following 311-residue polypeptide: Methionyl-tRNA formyltransferase (311 aa).

109-112 (SLLP) lines the (6S)-5,6,7,8-tetrahydrofolate pocket.

It belongs to the Fmt family.

The catalysed reaction is L-methionyl-tRNA(fMet) + (6R)-10-formyltetrahydrofolate = N-formyl-L-methionyl-tRNA(fMet) + (6S)-5,6,7,8-tetrahydrofolate + H(+). Its function is as follows. Attaches a formyl group to the free amino group of methionyl-tRNA(fMet). The formyl group appears to play a dual role in the initiator identity of N-formylmethionyl-tRNA by promoting its recognition by IF2 and preventing the misappropriation of this tRNA by the elongation apparatus. In Acetivibrio thermocellus (strain ATCC 27405 / DSM 1237 / JCM 9322 / NBRC 103400 / NCIMB 10682 / NRRL B-4536 / VPI 7372) (Clostridium thermocellum), this protein is Methionyl-tRNA formyltransferase.